Here is an 841-residue protein sequence, read N- to C-terminus: Chitin synthase 1 (841 aa).

Residues 1–13 (MNPGQKQEHDQYP) show a composition bias toward basic and acidic residues. The segment at 1 to 98 (MNPGQKQEHD…YGEAPRRQPR (98 aa)) is disordered. Pro residues predominate over residues 76–85 (PPQPMGPPSP). The next 9 membrane-spanning stretches (helical) occupy residues 302–322 (WFFQ…IDVG), 385–405 (SVFG…FTAL), 526–546 (LIFS…LTSA), 564–584 (ILHT…FILA), 602–622 (FFAI…VVGV), 644–664 (NIII…FLFF), 673–693 (FIQY…YAFC), 778–798 (VISW…ENIL), and 816–836 (LWSV…YLIF).

This sequence belongs to the chitin synthase family.

The protein resides in the cell membrane. The enzyme catalyses [(1-&gt;4)-N-acetyl-beta-D-glucosaminyl](n) + UDP-N-acetyl-alpha-D-glucosamine = [(1-&gt;4)-N-acetyl-beta-D-glucosaminyl](n+1) + UDP + H(+). In terms of biological role, polymerizes chitin, a structural polymer of the cell wall and septum, by transferring the sugar moiety of UDP-GlcNAc to the non-reducing end of the growing chitin polymer. This is Chitin synthase 1 (chs1) from Phycomyces blakesleeanus (strain ATCC 8743b / DSM 1359 / FGSC 10004 / NBRC 33097 / NRRL 1555).